Here is a 657-residue protein sequence, read N- to C-terminus: Transketolase (657 aa).

Substrate is bound at residue histidine 31. Thiamine diphosphate-binding positions include histidine 71 and glycine 120–leucine 122. Aspartate 158 lines the Mg(2+) pocket. The thiamine diphosphate site is built by glycine 159 and asparagine 188. The Mg(2+) site is built by asparagine 188 and isoleucine 190. The substrate site is built by histidine 262, arginine 354, and serine 381. Histidine 262 provides a ligand contact to thiamine diphosphate. The Proton donor role is filled by glutamate 408. Phenylalanine 434 serves as a coordination point for thiamine diphosphate. Histidine 458, aspartate 466, and arginine 517 together coordinate substrate.

Belongs to the transketolase family. As to quaternary structure, homodimer. It depends on Mg(2+) as a cofactor. Ca(2+) serves as cofactor. Mn(2+) is required as a cofactor. The cofactor is Co(2+). Requires thiamine diphosphate as cofactor.

The enzyme catalyses D-sedoheptulose 7-phosphate + D-glyceraldehyde 3-phosphate = aldehydo-D-ribose 5-phosphate + D-xylulose 5-phosphate. It participates in carbohydrate biosynthesis; Calvin cycle. It functions in the pathway carbohydrate degradation; pentose phosphate pathway. In terms of biological role, catalyzes the transfer of a two-carbon ketol group from a ketose donor to an aldose acceptor, via a covalent intermediate with the cofactor thiamine pyrophosphate. The polypeptide is Transketolase (tklB) (Cereibacter sphaeroides (Rhodobacter sphaeroides)).